The primary structure comprises 309 residues: Probable cell division protein WhiA (309 aa).

Positions 275–309 form a DNA-binding region, H-T-H motif; sequence SLKELGELVPGGPISKSGINHRLRKINQYAEKLRA.

It belongs to the WhiA family.

In terms of biological role, involved in cell division and chromosome segregation. In Pediococcus pentosaceus (strain ATCC 25745 / CCUG 21536 / LMG 10740 / 183-1w), this protein is Probable cell division protein WhiA.